Consider the following 447-residue polypeptide: Argininosuccinate synthase (447 aa).

ATP contacts are provided by residues 17 to 25 (AFSGGLDTS) and alanine 43. Tyrosine 99 is an L-citrulline binding site. Residues glycine 129 and threonine 131 each contribute to the ATP site. L-aspartate contacts are provided by threonine 131, asparagine 135, and aspartate 136. Asparagine 135 is an L-citrulline binding site. ATP is bound at residue aspartate 136. L-citrulline-binding residues include arginine 139 and serine 192. Residue aspartate 194 coordinates ATP. The L-citrulline site is built by threonine 201, glutamate 203, and glutamate 280.

This sequence belongs to the argininosuccinate synthase family. Type 2 subfamily. Homotetramer.

The protein localises to the cytoplasm. The enzyme catalyses L-citrulline + L-aspartate + ATP = 2-(N(omega)-L-arginino)succinate + AMP + diphosphate + H(+). It functions in the pathway amino-acid biosynthesis; L-arginine biosynthesis; L-arginine from L-ornithine and carbamoyl phosphate: step 2/3. The sequence is that of Argininosuccinate synthase from Escherichia coli O139:H28 (strain E24377A / ETEC).